A 421-amino-acid polypeptide reads, in one-letter code: Extracellular signal-regulated kinase 1 (421 aa).

The region spanning 70–375 (YQILEIVGEG…VEDALKHPYL (306 aa)) is the Protein kinase domain. ATP-binding positions include 76-84 (VGEGAYGIV) and Lys-99. Asp-194 (proton acceptor) is an active-site residue. Thr-230 is subject to Phosphothreonine. The TXY motif lies at 230-232 (TEY). Phosphotyrosine is present on Tyr-232.

Belongs to the protein kinase superfamily. CMGC Ser/Thr protein kinase family. MAP kinase subfamily. It depends on Mg(2+) as a cofactor. In terms of processing, dually phosphorylated on Thr-230 and Tyr-232, which activates the enzyme.

It carries out the reaction L-seryl-[protein] + ATP = O-phospho-L-seryl-[protein] + ADP + H(+). It catalyses the reaction L-threonyl-[protein] + ATP = O-phospho-L-threonyl-[protein] + ADP + H(+). Its activity is regulated as follows. Activated by tyrosine and threonine phosphorylation. The sequence is that of Extracellular signal-regulated kinase 1 (CEK1) from Candida albicans (strain SC5314 / ATCC MYA-2876) (Yeast).